The chain runs to 129 residues: Small ribosomal subunit protein uS11 (129 aa).

This sequence belongs to the universal ribosomal protein uS11 family. In terms of assembly, part of the 30S ribosomal subunit. Interacts with proteins S7 and S18. Binds to IF-3.

In terms of biological role, located on the platform of the 30S subunit, it bridges several disparate RNA helices of the 16S rRNA. Forms part of the Shine-Dalgarno cleft in the 70S ribosome. The sequence is that of Small ribosomal subunit protein uS11 from Salmonella typhi.